Here is a 287-residue protein sequence, read N- to C-terminus: Inhibitory synaptic factor 1 (287 aa).

The interval 1–22 is disordered; it reads MSQSRAPAREPSETPSQREQIR. Residues 25 to 58 adopt a coiled-coil conformation; that stretch reads MKMVIQQLEGILKELKDVAHELREVVGQIDKLTS. Disordered stretches follow at residues 113–174 and 189–287; these read RRSA…GTRE and CDDD…NKDL. Residues 153–167 show a composition bias toward low complexity; sequence EEASSSTHSQSQKTS. Over residues 189–209 the composition is skewed to acidic residues; the sequence is CDDDEDEDEDEDGRDEEEDKL. The span at 259–274 shows a compositional bias: polar residues; the sequence is RNSSTQTVSDKSTQTL.

The protein belongs to the INSYN1 family.

It is found in the postsynaptic density. In terms of biological role, may be a component of the protein machinery at the inhibitory synapses, probably acting as a scaffold. This Danio rerio (Zebrafish) protein is Inhibitory synaptic factor 1.